We begin with the raw amino-acid sequence, 433 residues long: Glucose-1-phosphate adenylyltransferase (433 aa).

Residues Y117, G182, 197 to 198 (EK), and S215 each bind alpha-D-glucose 1-phosphate.

This sequence belongs to the bacterial/plant glucose-1-phosphate adenylyltransferase family. Homotetramer.

It carries out the reaction alpha-D-glucose 1-phosphate + ATP + H(+) = ADP-alpha-D-glucose + diphosphate. Its pathway is glycan biosynthesis; glycogen biosynthesis. Functionally, involved in the biosynthesis of ADP-glucose, a building block required for the elongation reactions to produce glycogen. Catalyzes the reaction between ATP and alpha-D-glucose 1-phosphate (G1P) to produce pyrophosphate and ADP-Glc. The protein is Glucose-1-phosphate adenylyltransferase of Nitrosomonas europaea (strain ATCC 19718 / CIP 103999 / KCTC 2705 / NBRC 14298).